Reading from the N-terminus, the 164-residue chain is NADH-quinone oxidoreductase subunit I 2 (164 aa).

2 consecutive 4Fe-4S ferredoxin-type domains span residues 39-71 (IVLT…VVKA) and 81-110 (ESFR…LTPD). Cys-51, Cys-54, Cys-57, Cys-61, Cys-90, Cys-93, Cys-96, and Cys-100 together coordinate [4Fe-4S] cluster.

The protein belongs to the complex I 23 kDa subunit family. As to quaternary structure, NDH-1 is composed of 14 different subunits. Subunits NuoA, H, J, K, L, M, N constitute the membrane sector of the complex. The cofactor is [4Fe-4S] cluster.

The protein resides in the cell inner membrane. It carries out the reaction a quinone + NADH + 5 H(+)(in) = a quinol + NAD(+) + 4 H(+)(out). In terms of biological role, NDH-1 shuttles electrons from NADH, via FMN and iron-sulfur (Fe-S) centers, to quinones in the respiratory chain. The immediate electron acceptor for the enzyme in this species is believed to be ubiquinone. Couples the redox reaction to proton translocation (for every two electrons transferred, four hydrogen ions are translocated across the cytoplasmic membrane), and thus conserves the redox energy in a proton gradient. The chain is NADH-quinone oxidoreductase subunit I 2 from Cereibacter sphaeroides (strain ATCC 17023 / DSM 158 / JCM 6121 / CCUG 31486 / LMG 2827 / NBRC 12203 / NCIMB 8253 / ATH 2.4.1.) (Rhodobacter sphaeroides).